The sequence spans 466 residues: tRNA modification GTPase MnmE (466 aa).

Residues arginine 24, glutamate 85, and lysine 128 each contribute to the (6S)-5-formyl-5,6,7,8-tetrahydrofolate site. Residues 224 to 384 (GLNIVLAGQP…LRTELLHLVG (161 aa)) form the TrmE-type G domain. K(+) is bound at residue asparagine 234. GTP contacts are provided by residues 234 to 239 (NVGKSS), 253 to 259 (TPIAGTT), and 278 to 281 (DTAG). Residue serine 238 coordinates Mg(2+). Residues threonine 253, isoleucine 255, and threonine 258 each coordinate K(+). Threonine 259 contributes to the Mg(2+) binding site. Position 466 (lysine 466) interacts with (6S)-5-formyl-5,6,7,8-tetrahydrofolate.

This sequence belongs to the TRAFAC class TrmE-Era-EngA-EngB-Septin-like GTPase superfamily. TrmE GTPase family. In terms of assembly, homodimer. Heterotetramer of two MnmE and two MnmG subunits. K(+) is required as a cofactor.

The protein resides in the cytoplasm. Functionally, exhibits a very high intrinsic GTPase hydrolysis rate. Involved in the addition of a carboxymethylaminomethyl (cmnm) group at the wobble position (U34) of certain tRNAs, forming tRNA-cmnm(5)s(2)U34. This chain is tRNA modification GTPase MnmE, found in Herminiimonas arsenicoxydans.